The chain runs to 2231 residues: Helicase SEN1 (2231 aa).

Residues 1-17 (MNSNNPDNNNSNNINNN) are compositionally biased toward low complexity. 2 disordered regions span residues 1-24 (MNSN…KDIA) and 1032-1061 (HPPS…SDND). Residues Gln1339 and 1360-1364 (GTGKT) contribute to the ATP site. Residues 1491 to 1511 (ELRGKLDSESGNPESPMSTED) form a disordered region. The segment covering 1499–1510 (ESGNPESPMSTE) has biased composition (polar residues). ATP is bound by residues Gln1619, Tyr1655, and Glu1787. 2 disordered regions span residues 1894–1993 (ITQG…AVVG) and 2032–2231 (QLGL…KPRS). A Nuclear localization signal motif is present at residues 1909 to 1927 (KRRVVDEGEEADKAVKKKK). Residues 1923–1937 (VKKKKKEKKKEKKKS) are compositionally biased toward basic residues. Residues 1938 to 1950 (KADDKKKNNKKAE) are compositionally biased toward basic and acidic residues. Over residues 2048 to 2058 (NNEDDDDEDDY) the composition is skewed to acidic residues. Composition is skewed to polar residues over residues 2060–2088 (PSIS…NFSA) and 2095–2104 (QVSQAKQTQV). A compositionally biased stretch (low complexity) spans 2114 to 2123 (SNSVLSGGSS). Polar residues predominate over residues 2134–2160 (PNQNGQNGANRTLSQHVGNANQYSTAP). The segment covering 2210 to 2220 (RNSSRRNASSS) has biased composition (low complexity).

The protein belongs to the DNA2/NAM7 helicase family. Interacts with RAD2, RNT1 and RPB1. Binds to multiple snoRNAs.

It localises to the nucleus. ATP-dependent 5'-&gt;3' DNA/RNA helicase required for the expression and maturation of diverse classes of non-protein-coding RNAs like precursor tRNAs, rRNAs and small nuclear (snRNA) and nucleolar (snoRNA) RNAs. Directs RNA polymerase II transcription termination on snoRNAs as well as on several short protein-coding genes. May also play a role in transcription-coupled nucleotide excision repair. This chain is Helicase SEN1 (SEN1), found in Saccharomyces cerevisiae (strain ATCC 204508 / S288c) (Baker's yeast).